Consider the following 314-residue polypeptide: DegV domain-containing protein XAC3508 (314 aa).

In terms of domain architecture, DegV spans 3 to 307; it reads IGIVVDSACD…KGALAVGFAA (305 aa). Residues Thr-63 and Ser-96 each coordinate hexadecanoate.

Functionally, may bind long-chain fatty acids, such as palmitate, and may play a role in lipid transport or fatty acid metabolism. The sequence is that of DegV domain-containing protein XAC3508 from Xanthomonas axonopodis pv. citri (strain 306).